The following is a 260-amino-acid chain: BTB/POZ domain-containing protein KCTD21 (260 aa).

The region spanning 3 to 72 (DPITLNVGGK…LRTSHLDLPE (70 aa)) is the BTB domain. Positions 88–112 (QVQPLIEALQEKEVELSKAEKNAML) form a coiled coil.

Homopentamer. Interacts with KCTD11; KCTD21 and KCTD11 may associate in pentameric assemblies. Interacts (via BTB domain) with CUL3; indicative for a participation in a BCR (BTB-CUL3-RBX1) E3 ubiquitin-protein ligase complex. In terms of tissue distribution, highly expressed in cerebellum and brain. Expressed in adult cerebellum (at protein level).

Its pathway is protein modification; protein ubiquitination. In terms of biological role, probable substrate-specific adapter of a BCR (BTB-CUL3-RBX1) E3 ubiquitin-protein ligase complex mediating the ubiquitination and subsequent proteasomal degradation of target proteins. Promotes the ubiquitination of HDAC1. Can function as antagonist of the Hedgehog pathway by affecting the nuclear transfer of transcription factor GLI1; the function probably occurs via HDAC1 down-regulation, keeping GLI1 acetylated and inactive. Inhibits cell growth and tumorigenicity of medulloblastoma (MDB). The polypeptide is BTB/POZ domain-containing protein KCTD21 (Kctd21) (Mus musculus (Mouse)).